Consider the following 1527-residue polypeptide: DNA-directed RNA polymerase subunit beta'' (1527 aa).

Cys220, Cys296, Cys303, and Cys306 together coordinate Zn(2+). Composition is skewed to basic and acidic residues over residues 644-661 (RTQE…RTRE) and 671-681 (PENKYRTREGE). 2 disordered regions span residues 644 to 681 (RTQE…REGE) and 712 to 793 (YRTL…KKEG). Acidic residues-rich tracts occupy residues 737–755 (GEYE…SSED) and 763–786 (TLEE…PEED).

This sequence belongs to the RNA polymerase beta' chain family. RpoC2 subfamily. In terms of assembly, in plastids the minimal PEP RNA polymerase catalytic core is composed of four subunits: alpha, beta, beta', and beta''. When a (nuclear-encoded) sigma factor is associated with the core the holoenzyme is formed, which can initiate transcription. Zn(2+) is required as a cofactor.

The protein resides in the plastid. The protein localises to the chloroplast. It catalyses the reaction RNA(n) + a ribonucleoside 5'-triphosphate = RNA(n+1) + diphosphate. Functionally, DNA-dependent RNA polymerase catalyzes the transcription of DNA into RNA using the four ribonucleoside triphosphates as substrates. In Zea mays (Maize), this protein is DNA-directed RNA polymerase subunit beta''.